The following is a 558-amino-acid chain: MVMYARKQPRLGDGCTDRRDSQPYQTLKYSSKSHPDHRHEKMRDSNDATPPCKMLRRSDSPDNKHMDNTGHGRAKAIHPHRGREREGGTSISPQENSHNHSSLHSSNSHSNPNKSSDTPFEPADDWSEHISSSGKKYYYNCRTEVSQWEKPKEWLEREQRQKEATKTAAVVNSFPKDRDYRREAMQATPASYSSTKSSIATEKPSSLTPSSSSAAVSGLDVPNSASSASGSTVPVSPVMQSPAPPTLLQDPSLLRQLLLALQTALQLNNASVDMAKINEVLTAAVTQASLQSILHKILTAGPSAFNITTLLSQATQLSNQVAQQSSQSPMSLTSDASSPRSYVSPRISTPQTNTASLKPPLSTTPVSSQTKINAMTVKSSSLPPPSSQQPLSTEKHHDNGNSPRTLQRQSSQRSPSPGPNHMGSNSSSSSNNGGGGGGQGPGVVSGAMPPGSVPPGTAPGRATCSFTPTLAAHFNENLIKHVQGWPAEHVEKQASRLREEAHTMGSIYMSENCTELKNLRSLVRVCEIQATLREQRILFLRQQIKELEKLKNQNSFMV.

Disordered regions lie at residues 1-129 (MVMY…WSEH), 159-244 (QRQK…SPAP), and 321-461 (VAQQ…APGR). The span at 22–32 (QPYQTLKYSSK) shows a compositional bias: polar residues. Composition is skewed to basic and acidic residues over residues 33–46 (SHPD…RDSN) and 56–70 (RRSD…DNTG). A compositionally biased stretch (basic residues) spans 72–82 (GRAKAIHPHRG). The span at 99-116 (NHSSLHSSNSHSNPNKSS) shows a compositional bias: low complexity. The WW domain occupies 120–153 (FEPADDWSEHISSSGKKYYYNCRTEVSQWEKPKE). Residues 175-184 (PKDRDYRREA) show a composition bias toward basic and acidic residues. Positions 188–200 (TPASYSSTKSSIA) are enriched in polar residues. Low complexity predominate over residues 204 to 217 (PSSLTPSSSSAAVS). Composition is skewed to polar residues over residues 223-234 (NSASSASGSTVP) and 321-378 (VAQQ…MTVK). The span at 402-431 (SPRTLQRQSSQRSPSPGPNHMGSNSSSSSN) shows a compositional bias: low complexity. Residues 432 to 443 (NGGGGGGQGPGV) are compositionally biased toward gly residues. The stretch at 529–555 (QATLREQRILFLRQQIKELEKLKNQNS) forms a coiled coil.

Its subcellular location is the nucleus. Its function is as follows. Acts as a linker between gene transcription and histone H2B monoubiquitination at 'Lys-120' (H2BK120ub1). Positive regulator of amino acid starvation-induced autophagy. Positively regulates MTOR activity. May negatively regulate the ubiquitin proteasome pathway. This chain is WW domain-containing adapter protein with coiled-coil (waca), found in Danio rerio (Zebrafish).